The following is a 154-amino-acid chain: Small ribosomal subunit protein uS7c (154 aa).

It belongs to the universal ribosomal protein uS7 family. Part of the 30S ribosomal subunit.

Its subcellular location is the plastid. It is found in the chloroplast. Functionally, one of the primary rRNA binding proteins, it binds directly to 16S rRNA where it nucleates assembly of the head domain of the 30S subunit. The protein is Small ribosomal subunit protein uS7c (rps7) of Pleurastrum terricola (Filamentous green alga).